The sequence spans 490 residues: Colicin-10 (490 aa).

Polar residues predominate over residues 1–20; it reads MDKVTDNSPDVESTESTEGS. Disordered stretches follow at residues 1-29 and 146-171; these read MDKV…VDTG and QKAR…EIAR. Basic and acidic residues predominate over residues 146 to 170; the sequence is QKAREEAEAAEKALREAERQRDEIA. A helical membrane pass occupies residues 447 to 467; it reads IVALMFSFIVGAPLGFWGIAI.

Belongs to the channel forming colicin family.

It is found in the host membrane. This colicin is a channel-forming colicin. This class of transmembrane toxins depolarize the cytoplasmic membrane, leading to dissipation of cellular energy. Functionally, colicins are polypeptide toxins produced by and active against E.coli and closely related bacteria. In Escherichia coli, this protein is Colicin-10 (cta).